We begin with the raw amino-acid sequence, 182 residues long: MYSDTFDLKALIRPVVDFPKPGVIFRDITPLFQSPRGLRYVADQFIERYVEADFTHIGAMDARGFLIGSIIAHQLNKPLILFRKQGKLPADVLSEGYQTEYGEAFLEVHADSLCDGDSVLIFDDLIATGGTLLAAANLVRRTGAKVFEAAAIIDLPELEGSRRLQAAGVPTFCLTEFSLSEY.

The protein belongs to the purine/pyrimidine phosphoribosyltransferase family. As to quaternary structure, homodimer.

It is found in the cytoplasm. The catalysed reaction is AMP + diphosphate = 5-phospho-alpha-D-ribose 1-diphosphate + adenine. Its pathway is purine metabolism; AMP biosynthesis via salvage pathway; AMP from adenine: step 1/1. Functionally, catalyzes a salvage reaction resulting in the formation of AMP, that is energically less costly than de novo synthesis. This is Adenine phosphoribosyltransferase from Pseudomonas entomophila (strain L48).